Here is a 422-residue protein sequence, read N- to C-terminus: MRVLVIGSGAREHALLLALGKDPQVSGLIVAPGNAGTARIAEQHDVDITSAEAVVALAREVGADMVVIGPEVPLVLGVADAVRAAGIVCFGPGKDAARIEGSKAFAKDVMAAAGVRTANSEIVDSPAHLDAALDRFGPPAGDPAWVVKDDRLAAGKGVVVTADRDVARAHGAALLEAGHPVLLESYLDGPEVSLFCVVDRTVVVPLLPAQDFKRVGEDDTGLNTGGMGAYAPLPWLPDNIYREVVSRIVEPVAAELVRRGSSFCGLLYVGLAITARGPAVVEFNCRFGDPETQAVLALLESPLGQLLHAAATGKLADFGELRWRDGVAVTVVLAAENYPGRPRVGDVVVGSEAEGVLHAGTTRRDDGAIVSSGGRVLSVVGTGADLSAARAHAYEILSSIRLPGGHFRSDIGLRAAEGKISV.

Positions 107-312 (KDVMAAAGVR…LGQLLHAAAT (206 aa)) constitute an ATP-grasp domain. Residue 137 to 193 (GPPAGDPAWVVKDDRLAAGKGVVVTADRDVARAHGAALLEAGHPVLLESYLDGPEVS) coordinates ATP. Positions 282 and 284 each coordinate Mg(2+).

The protein belongs to the GARS family. Mg(2+) is required as a cofactor. Requires Mn(2+) as cofactor.

It carries out the reaction 5-phospho-beta-D-ribosylamine + glycine + ATP = N(1)-(5-phospho-beta-D-ribosyl)glycinamide + ADP + phosphate + H(+). The protein operates within purine metabolism; IMP biosynthesis via de novo pathway; N(1)-(5-phospho-D-ribosyl)glycinamide from 5-phospho-alpha-D-ribose 1-diphosphate: step 2/2. The sequence is that of Phosphoribosylamine--glycine ligase from Mycobacterium bovis (strain ATCC BAA-935 / AF2122/97).